Consider the following 521-residue polypeptide: Protein PLM2 (521 aa).

A disordered region spans residues 1 to 63; sequence MSHLFPPSSP…SIGRQSSPVK (63 aa). The span at 51–63 shows a compositional bias: polar residues; that stretch reads PSSSIGRQSSPVK. In terms of domain architecture, FHA spans 102–156; that stretch reads LAIGRKKSVCNIILPCRKNISRQHAFISYAADRNEIKLECNGTNGLSVHLPYSMQ. A phosphoserine mark is found at serine 281, serine 295, serine 302, and serine 384.

The protein belongs to the PLM2/TOS4 family. In terms of processing, phosphorylated by CDC28.

The protein localises to the nucleus. Its function is as follows. Binds to the promoters of genes with functions important for the G1/S (start) transition; primarily genes involved in DNA synthesis and repair, chromosome segregation, nuclear division and transcription. This chain is Protein PLM2 (PLM2), found in Saccharomyces cerevisiae (strain ATCC 204508 / S288c) (Baker's yeast).